Here is a 307-residue protein sequence, read N- to C-terminus: Predicted GPI-anchored protein 44 (307 aa).

The first 22 residues, 1–22 (MLSTNNLLILLIFSFLITNVKS), serve as a signal peptide directing secretion. N-linked (GlcNAc...) asparagine glycans are attached at residues asparagine 146 and asparagine 217. The disordered stretch occupies residues 232 to 261 (TPQPLLETPSQESSAPNIDSTTPTTIDNTV). The segment covering 239–254 (TPSQESSAPNIDSTTP) has biased composition (polar residues). The GPI-anchor amidated glycine moiety is linked to residue glycine 286. A propeptide spans 287–307 (GAMGYPSISVALGLVFIAYLV) (removed in mature form).

The protein resides in the cell membrane. This chain is Predicted GPI-anchored protein 44 (PGA44), found in Candida albicans (strain SC5314 / ATCC MYA-2876) (Yeast).